The chain runs to 690 residues: Secreted LysM effector Vd5LysM (690 aa).

N-linked (GlcNAc...) asparagine glycans are attached at residues Asn-4 and Asn-69. LysM domains lie at 203–248, 253–301, and 341–387; these read TQYT…SLCI, DTVT…TLCI, and RWYN…SYCV. Residues Asn-260, Asn-295, Asn-375, Asn-410, Asn-423, and Asn-492 are each glycosylated (N-linked (GlcNAc...) asparagine). The tract at residues 523–546 is disordered; the sequence is PATATTGDGGPTPPAPTHSGQPQD. Positions 549–596 constitute a LysM 4 domain; the sequence is TWHVVSSGDSCQSVADDAGISRDQFHDWNPAVGRDCSTNFWLGQAYCV. The segment covering 606–619 has biased composition (low complexity); sequence STVASSTTSSVTPG. The tract at residues 606–636 is disordered; that stretch reads STVASSTTSSVTPGPSKPEPPGPTHTGQPSD. The LysM 5 domain occupies 639 to 686; the sequence is EWDVVETGDTCGSLAESNDISLSQFFDWNPAVSRDCVANFWIGQAYCI.

It belongs to the secreted LysM effector family.

In terms of biological role, might have a role in sequestration of chitin oligosaccharides (breakdown products of fungal cell walls that are released during invasion and act as triggers of host immunity) to dampen host defense. Does not play an important role during host colonization. The protein is Secreted LysM effector Vd5LysM of Verticillium dahliae (strain VdLs.17 / ATCC MYA-4575 / FGSC 10137) (Verticillium wilt).